We begin with the raw amino-acid sequence, 325 residues long: Putative HTH-type transcriptional regulatory protein HQ_3058A (325 aa).

In terms of domain architecture, HTH cro/C1-type spans 132–186; that stretch reads LADEREERGWSLGRLATELGVSRRTVSKYEDGMNASIEIAIQLEEVFDEPFSSPL. Residues 143–162 constitute a DNA-binding region (H-T-H motif); sequence LGRLATELGVSRRTVSKYED. Positions 189 to 211 are disordered; it reads MEGAESVRDSEPTPDDPDPDADD. Residues 200 to 211 are compositionally biased toward acidic residues; the sequence is PTPDDPDPDADD.

The chain is Putative HTH-type transcriptional regulatory protein HQ_3058A from Haloquadratum walsbyi (strain DSM 16790 / HBSQ001).